The chain runs to 121 residues: Large ribosomal subunit protein bL12 (121 aa).

This sequence belongs to the bacterial ribosomal protein bL12 family. As to quaternary structure, homodimer. Part of the ribosomal stalk of the 50S ribosomal subunit. Forms a multimeric L10(L12)X complex, where L10 forms an elongated spine to which 2 to 4 L12 dimers bind in a sequential fashion. Binds GTP-bound translation factors.

Its function is as follows. Forms part of the ribosomal stalk which helps the ribosome interact with GTP-bound translation factors. Is thus essential for accurate translation. This is Large ribosomal subunit protein bL12 from Aliivibrio salmonicida (strain LFI1238) (Vibrio salmonicida (strain LFI1238)).